The primary structure comprises 58 residues: Small ribosomal subunit protein bS21 (58 aa).

This sequence belongs to the bacterial ribosomal protein bS21 family.

This is Small ribosomal subunit protein bS21 from Synechococcus sp. (strain CC9605).